We begin with the raw amino-acid sequence, 144 residues long: Bacilliredoxin BC_2157 (144 aa).

Belongs to the bacilliredoxin family.

In Bacillus cereus (strain ATCC 14579 / DSM 31 / CCUG 7414 / JCM 2152 / NBRC 15305 / NCIMB 9373 / NCTC 2599 / NRRL B-3711), this protein is Bacilliredoxin BC_2157.